The chain runs to 373 residues: MEDSNMLPQFIHGILSTSHSLFPRSIQELDEGATTPYDYDDGEPCHKTSVKQIGAWILPPLYSLVFIFGFVGNMLVIIILISCKKLKSMTDIYLFNLAISDLLFLLTLPFWAHYAANEWVFGNIMCKLFTGLYHIGYFGGIFFIILLTIDRYLAIVHAVFALKARTVTFGVITSVVTWVVAVFASLPGIIFTKSEQEDDQHTCGPYFPTIWKNFQTIMRNILSLILPLLVMVICYSGILHTLFRCRNEKKRHRAVRLIFAIMIVYFLFWTPYNIVLFLTTFQEFLGMSNCVVDMHLDQAMQVTETLGMTHCCVNPIIYAFVGEKFRRYLSIFFRKHIAKNLCKQCPVFYRETADRVSSTFTPSTGEQEVSVGL.

The Extracellular portion of the chain corresponds to 1-60 (MEDSNMLPQFIHGILSTSHSLFPRSIQELDEGATTPYDYDDGEPCHKTSVKQIGAWILPP). The helical transmembrane segment at 61 to 81 (LYSLVFIFGFVGNMLVIIILI) threads the bilayer. Over 82–91 (SCKKLKSMTD) the chain is Cytoplasmic. Residues 92–112 (IYLFNLAISDLLFLLTLPFWA) traverse the membrane as a helical segment. At 113–128 (HYAANEWVFGNIMCKL) the chain is on the extracellular side. Residues Cys126 and Cys203 are joined by a disulfide bond. The helical transmembrane segment at 129-149 (FTGLYHIGYFGGIFFIILLTI) threads the bilayer. The Cytoplasmic segment spans residues 150–170 (DRYLAIVHAVFALKARTVTFG). Tyr152 is subject to Phosphotyrosine; by JAK2. The chain crosses the membrane as a helical span at residues 171–191 (VITSVVTWVVAVFASLPGIIF). The Extracellular segment spans residues 192–220 (TKSEQEDDQHTCGPYFPTIWKNFQTIMRN). The helical transmembrane segment at 221-241 (ILSLILPLLVMVICYSGILHT) threads the bilayer. At 242-256 (LFRCRNEKKRHRAVR) the chain is on the cytoplasmic side. A helical membrane pass occupies residues 257–277 (LIFAIMIVYFLFWTPYNIVLF). Residues 278–301 (LTTFQEFLGMSNCVVDMHLDQAMQ) are Extracellular-facing. A helical transmembrane segment spans residues 302–322 (VTETLGMTHCCVNPIIYAFVG). At 323–373 (EKFRRYLSIFFRKHIAKNLCKQCPVFYRETADRVSSTFTPSTGEQEVSVGL) the chain is on the cytoplasmic side.

This sequence belongs to the G-protein coupled receptor 1 family. Interacts with ARRB1. Interacts (via extracellular N-terminal region) with beta-defensin DEFB106A/DEFB106B; this interaction may preferentially require specific tyrosine sulfation on CCR2. Interacts with NUP85; the interaction is required for CCR2 clusters formation on the cell membrane and CCR2 signaling. In terms of processing, N-glycosylated. Post-translationally, sulfation increases the affinity for both monomeric and dimeric CCL2 with stronger binding to the monomeric form. Binding of sulfated CCR2 to CCL2 promotes conversion of CCL2 from dimer to monomer. Expressed in lung, spleen, kidney, thymus and macrophages.

Its subcellular location is the cell membrane. Its function is as follows. Key functional receptor for CCL2 but can also bind CCL7 and CCL12. Its binding with CCL2 on monocytes and macrophages mediates chemotaxis and migration induction through the activation of the PI3K cascade, the small G protein Rac and lamellipodium protrusion. Also acts as a receptor for the beta-defensin DEFB106A/DEFB106B. Regulates the expression of T-cell inflammatory cytokines and T-cell differentiation, promoting the differentiation of T-cells into T-helper 17 cells (Th17) during inflammation. Facilitates the export of mature thymocytes by enhancing directional movement of thymocytes to sphingosine-1-phosphate stimulation and up-regulation of S1P1R expression; signals through the JAK-STAT pathway to regulate FOXO1 activity leading to an increased expression of S1P1R. Plays an important role in mediating peripheral nerve injury-induced neuropathic pain. Increases NMDA-mediated synaptic transmission in both dopamine D1 and D2 receptor-containing neurons, which may be caused by MAPK/ERK-dependent phosphorylation of GRIN2B/NMDAR2B. Mediates the recruitment of macrophages and monocytes to the injury site following brain injury. This chain is C-C chemokine receptor type 2 (Ccr2), found in Rattus norvegicus (Rat).